Consider the following 365-residue polypeptide: 3-amino-4-hydroxybenzoate 4-O-methyltransferase (365 aa).

Over residues Met-1 to Thr-18 the composition is skewed to polar residues. Residues Met-1–Asp-32 are disordered. S-adenosyl-L-methionine is bound by residues Asp-227, Gly-253 to Phe-255, and Arg-270. The active-site Proton acceptor is the His-273.

It belongs to the class I-like SAM-binding methyltransferase superfamily. Cation-independent O-methyltransferase family.

The enzyme catalyses 3-amino-2,4-dihydroxybenzoate + S-adenosyl-L-methionine = 3-amino-2-hydroxy-4-methoxybenzoate + S-adenosyl-L-homocysteine + H(+). Its pathway is antibiotic biosynthesis. Part of a gene cluster involved in the biosynthesis of cremeomycin, a light-sensitive o-diazoquinone with antibacterial and antiproliferative effects. Catalyzes the methylation of the C4 hydroxyl group of 3-amino-2,4-dihydroxybenzoate (3,2,4-ADHBA) to form 3-amino-2-hydroxy-4-methoxybenzoate (3,2,4-AHMBA). In vitro, can also catalyze the methylation of 3-amino-4-hydroxybenzoate (3,4-AHBA). In Streptomyces cremeus, this protein is 3-amino-4-hydroxybenzoate 4-O-methyltransferase.